The primary structure comprises 447 residues: Maltoporin (447 aa).

The signal sequence occupies residues Met1–Ala26.

The protein belongs to the porin LamB (TC 1.B.3) family. As to quaternary structure, homotrimer formed of three 18-stranded antiparallel beta-barrels, containing three independent channels.

Its subcellular location is the cell outer membrane. It carries out the reaction beta-maltose(in) = beta-maltose(out). Involved in the transport of maltose and maltodextrins. The sequence is that of Maltoporin from Vibrio campbellii (strain ATCC BAA-1116).